We begin with the raw amino-acid sequence, 101 residues long: MDKSKQPFHKTKRSFRRRLPPIGSGDRIDYRNMSLISRFISEQGKILSRRVNRLTLKQQRLITIAIKQARILSLLPFLNNEKQFERTESIPRATGPRTRNK.

A compositionally biased stretch (basic residues) spans 1–19 (MDKSKQPFHKTKRSFRRRL). A disordered region spans residues 1–23 (MDKSKQPFHKTKRSFRRRLPPIG).

Belongs to the bacterial ribosomal protein bS18 family. As to quaternary structure, part of the 30S ribosomal subunit.

The protein localises to the plastid. It localises to the chloroplast. This Lemna minor (Common duckweed) protein is Small ribosomal subunit protein bS18c.